Reading from the N-terminus, the 673-residue chain is Metal-nicotianamine transporter YSL1 (673 aa).

A compositionally biased stretch (basic and acidic residues) spans 1–13; that stretch reads MEIEQRRIMKREG. The interval 1-39 is disordered; that stretch reads MEIEQRRIMKREGEEEEDNNQLSLQEEEPDTEEEMSGRT. A compositionally biased stretch (acidic residues) spans 14–34; it reads EEEEDNNQLSLQEEEPDTEEE. The next 16 helical transmembrane spans lie at 46–66, 71–91, 119–139, 163–183, 225–245, 260–280, 283–303, 328–348, 392–412, 420–440, 442–462, 467–487, 510–530, 558–578, 604–624, and 642–662; these read QITVRGVFVSIVIGVVFSVIA, LTTGIVPNLNSSAALLAFVFV, SAVACYGIAVGGGFASYLLGL, GLGWMTAYLFVVCFIGLFVLI, FMKYFSFSFLWGFFQWFFSGI, AWKQTFFFDFSMTFVGAGMIC, LVNLSLLLGAILSYGLMWPLL, VFLSVALILGDGLYTFVKILF, FAVSGYLTFAAVSTVVVPLIF, VIVAYIFAPSLAFCNAYGAGL, DINMAYNYGKIGLFVIAAVTG, VVAGLAGCGLIKSVVSVSCIL, IGTVVGCIVTPLSFFLFYKAF, FSALPLHCLQMCYGFFGFAVL, FLVGAYFAIDMCVGTLIVFVW, and GLICGEGLWTLPAAVLALAGV.

This sequence belongs to the YSL (TC 2.A.67.2) family. As to expression, low levels of expression in leaves and shoots, but not detected in roots. Restricted to the vasculature, in the xylem parenchyma surrounding xylem tubes. Expressed in pollen grains, in the vasculature of petals and sepals, in the carpel veins, in the style underneath the stigmatic papillae, in the vascular tissue of the funiculus and in the chalazal endosperm.

It is found in the membrane. Its function is as follows. Involved in iron loading of the seeds. Acts probably as a transporter of iron- and metal-nicotianamine chelates. In Arabidopsis thaliana (Mouse-ear cress), this protein is Metal-nicotianamine transporter YSL1 (YSL1).